Reading from the N-terminus, the 360-residue chain is Peptide chain release factor 1 (360 aa).

Q235 bears the N5-methylglutamine mark. Positions 283 to 308 (MQKRQQAEASERRNLLGSGDRSDRNR) are enriched in basic and acidic residues. The segment at 283–313 (MQKRQQAEASERRNLLGSGDRSDRNRTYNFP) is disordered.

Belongs to the prokaryotic/mitochondrial release factor family. Post-translationally, methylated by PrmC. Methylation increases the termination efficiency of RF1.

It localises to the cytoplasm. Peptide chain release factor 1 directs the termination of translation in response to the peptide chain termination codons UAG and UAA. In Yersinia enterocolitica serotype O:8 / biotype 1B (strain NCTC 13174 / 8081), this protein is Peptide chain release factor 1.